We begin with the raw amino-acid sequence, 95 residues long: Aspartyl/glutamyl-tRNA(Asn/Gln) amidotransferase subunit C (95 aa).

Belongs to the GatC family. In terms of assembly, heterotrimer of A, B and C subunits.

The catalysed reaction is L-glutamyl-tRNA(Gln) + L-glutamine + ATP + H2O = L-glutaminyl-tRNA(Gln) + L-glutamate + ADP + phosphate + H(+). It carries out the reaction L-aspartyl-tRNA(Asn) + L-glutamine + ATP + H2O = L-asparaginyl-tRNA(Asn) + L-glutamate + ADP + phosphate + 2 H(+). In terms of biological role, allows the formation of correctly charged Asn-tRNA(Asn) or Gln-tRNA(Gln) through the transamidation of misacylated Asp-tRNA(Asn) or Glu-tRNA(Gln) in organisms which lack either or both of asparaginyl-tRNA or glutaminyl-tRNA synthetases. The reaction takes place in the presence of glutamine and ATP through an activated phospho-Asp-tRNA(Asn) or phospho-Glu-tRNA(Gln). In Chromohalobacter salexigens (strain ATCC BAA-138 / DSM 3043 / CIP 106854 / NCIMB 13768 / 1H11), this protein is Aspartyl/glutamyl-tRNA(Asn/Gln) amidotransferase subunit C.